The chain runs to 871 residues: Coatomer subunit gamma-2 (871 aa).

The span at Met-1–Glu-11 shows a compositional bias: basic and acidic residues. Residues Met-1–His-21 form a disordered region. HEAT repeat units follow at residues Thr-64–Asp-101, Arg-283–Ser-320, Ala-321–Ser-355, Ser-356–Arg-392, Ser-395–Glu-430, and Pro-467–Ser-504. A Phosphothreonine modification is found at Thr-594.

It belongs to the COPG family. Oligomeric complex. Binds to CDC42. Interacts with JAGN1. Interacts with TMED10 (via cytoplasmic domain).

It localises to the cytoplasm. The protein localises to the cytosol. The protein resides in the golgi apparatus membrane. It is found in the cytoplasmic vesicle. Its subcellular location is the COPI-coated vesicle membrane. The coatomer is a cytosolic protein complex that binds to dilysine motifs and reversibly associates with Golgi non-clathrin-coated vesicles, which further mediate biosynthetic protein transport from the ER, via the Golgi up to the trans Golgi network. Coatomer complex is required for budding from Golgi membranes, and is essential for the retrograde Golgi-to-ER transport of dilysine-tagged proteins. In mammals, the coatomer can only be recruited by membranes associated to ADP-ribosylation factors (ARFs), which are small GTP-binding proteins; the complex also influences the Golgi structural integrity, as well as the processing, activity, and endocytic recycling of LDL receptors. The chain is Coatomer subunit gamma-2 (COPG2) from Homo sapiens (Human).